Reading from the N-terminus, the 505-residue chain is NADH-quinone oxidoreductase subunit N 1 (505 aa).

The next 14 membrane-spanning stretches (helical) occupy residues 18–38 (LIPE…EMVL), 45–65 (LIAT…AWDF), 84–104 (YVGQ…SILA), 116–136 (IEFY…AQAN), 138–158 (FVLF…LVSY), 173–193 (LIMG…LYGV), 223–243 (FLAA…IGAF), 271–291 (AGFA…WWLV), 292–312 (QPVL…AALT), 319–339 (LIGL…IASH), 345–365 (VGAV…VFGV), 391–411 (FLAA…PLAG), 429–449 (GLLA…FGWI), and 473–493 (VGAA…LFGV).

Belongs to the complex I subunit 2 family. As to quaternary structure, NDH-1 is composed of 14 different subunits. Subunits NuoA, H, J, K, L, M, N constitute the membrane sector of the complex.

It localises to the cell inner membrane. The enzyme catalyses a quinone + NADH + 5 H(+)(in) = a quinol + NAD(+) + 4 H(+)(out). NDH-1 shuttles electrons from NADH, via FMN and iron-sulfur (Fe-S) centers, to quinones in the respiratory chain. The immediate electron acceptor for the enzyme in this species is believed to be ubiquinone. Couples the redox reaction to proton translocation (for every two electrons transferred, four hydrogen ions are translocated across the cytoplasmic membrane), and thus conserves the redox energy in a proton gradient. This is NADH-quinone oxidoreductase subunit N 1 from Opitutus terrae (strain DSM 11246 / JCM 15787 / PB90-1).